Here is a 477-residue protein sequence, read N- to C-terminus: tRNA-2-methylthio-N(6)-dimethylallyladenosine synthase (477 aa).

The MTTase N-terminal domain occupies 3-120; it reads KKLHIKTWGC…LPAMIKQVQE (118 aa). [4Fe-4S] cluster contacts are provided by Cys12, Cys49, Cys83, Cys157, Cys161, and Cys164. Residues 143 to 375 enclose the Radical SAM core domain; the sequence is RAEGATAFVS…QHVINNQSMQ (233 aa). In terms of domain architecture, TRAM spans 378-441; sequence RAMLGSTQRI…PNSLRGRFIR (64 aa).

It belongs to the methylthiotransferase family. MiaB subfamily. Monomer. Requires [4Fe-4S] cluster as cofactor.

It is found in the cytoplasm. The catalysed reaction is N(6)-dimethylallyladenosine(37) in tRNA + (sulfur carrier)-SH + AH2 + 2 S-adenosyl-L-methionine = 2-methylsulfanyl-N(6)-dimethylallyladenosine(37) in tRNA + (sulfur carrier)-H + 5'-deoxyadenosine + L-methionine + A + S-adenosyl-L-homocysteine + 2 H(+). Catalyzes the methylthiolation of N6-(dimethylallyl)adenosine (i(6)A), leading to the formation of 2-methylthio-N6-(dimethylallyl)adenosine (ms(2)i(6)A) at position 37 in tRNAs that read codons beginning with uridine. The protein is tRNA-2-methylthio-N(6)-dimethylallyladenosine synthase of Aeromonas salmonicida (strain A449).